The chain runs to 124 residues: Large ribosomal subunit protein bL12 (124 aa).

The protein belongs to the bacterial ribosomal protein bL12 family. In terms of assembly, homodimer. Part of the ribosomal stalk of the 50S ribosomal subunit. Forms a multimeric L10(L12)X complex, where L10 forms an elongated spine to which 2 to 4 L12 dimers bind in a sequential fashion. Binds GTP-bound translation factors.

Forms part of the ribosomal stalk which helps the ribosome interact with GTP-bound translation factors. Is thus essential for accurate translation. The protein is Large ribosomal subunit protein bL12 of Ralstonia pickettii (strain 12J).